Reading from the N-terminus, the 161-residue chain is UPF0178 protein PXO_00400 (161 aa).

This sequence belongs to the UPF0178 family.

The protein is UPF0178 protein PXO_00400 of Xanthomonas oryzae pv. oryzae (strain PXO99A).